A 495-amino-acid polypeptide reads, in one-letter code: Aspartyl/glutamyl-tRNA(Asn/Gln) amidotransferase subunit B (495 aa).

It belongs to the GatB/GatE family. GatB subfamily. Heterotrimer of A, B and C subunits.

It catalyses the reaction L-glutamyl-tRNA(Gln) + L-glutamine + ATP + H2O = L-glutaminyl-tRNA(Gln) + L-glutamate + ADP + phosphate + H(+). The enzyme catalyses L-aspartyl-tRNA(Asn) + L-glutamine + ATP + H2O = L-asparaginyl-tRNA(Asn) + L-glutamate + ADP + phosphate + 2 H(+). Its function is as follows. Allows the formation of correctly charged Asn-tRNA(Asn) or Gln-tRNA(Gln) through the transamidation of misacylated Asp-tRNA(Asn) or Glu-tRNA(Gln) in organisms which lack either or both of asparaginyl-tRNA or glutaminyl-tRNA synthetases. The reaction takes place in the presence of glutamine and ATP through an activated phospho-Asp-tRNA(Asn) or phospho-Glu-tRNA(Gln). The protein is Aspartyl/glutamyl-tRNA(Asn/Gln) amidotransferase subunit B of Prochlorococcus marinus (strain MIT 9313).